The chain runs to 340 residues: Phosphoribosylformylglycinamidine cyclo-ligase (340 aa).

The protein belongs to the AIR synthase family.

Its subcellular location is the cytoplasm. The catalysed reaction is 2-formamido-N(1)-(5-O-phospho-beta-D-ribosyl)acetamidine + ATP = 5-amino-1-(5-phospho-beta-D-ribosyl)imidazole + ADP + phosphate + H(+). Its pathway is purine metabolism; IMP biosynthesis via de novo pathway; 5-amino-1-(5-phospho-D-ribosyl)imidazole from N(2)-formyl-N(1)-(5-phospho-D-ribosyl)glycinamide: step 2/2. This is Phosphoribosylformylglycinamidine cyclo-ligase from Streptococcus pneumoniae (strain CGSP14).